The chain runs to 208 residues: Proteasome subunit beta 2 (208 aa).

A propeptide spans 1-14 (MGNELQLENKILKG) (removed in mature form; by autocatalysis). Catalysis depends on Thr15, which acts as the Nucleophile.

The protein belongs to the peptidase T1B family. The 20S proteasome core is composed of 14 alpha and 14 beta subunits that assemble into four stacked heptameric rings, resulting in a barrel-shaped structure. The two inner rings, each composed of seven catalytic beta subunits, are sandwiched by two outer rings, each composed of seven alpha subunits. The catalytic chamber with the active sites is on the inside of the barrel. Has a gated structure, the ends of the cylinder being occluded by the N-termini of the alpha-subunits. Is capped at one or both ends by the proteasome regulatory ATPase, PAN.

Its subcellular location is the cytoplasm. The enzyme catalyses Cleavage of peptide bonds with very broad specificity.. Its activity is regulated as follows. The formation of the proteasomal ATPase PAN-20S proteasome complex, via the docking of the C-termini of PAN into the intersubunit pockets in the alpha-rings, triggers opening of the gate for substrate entry. Interconversion between the open-gate and close-gate conformations leads to a dynamic regulation of the 20S proteasome proteolysis activity. Its function is as follows. Component of the proteasome core, a large protease complex with broad specificity involved in protein degradation. This is Proteasome subunit beta 2 from Saccharolobus solfataricus (strain ATCC 35092 / DSM 1617 / JCM 11322 / P2) (Sulfolobus solfataricus).